Here is a 287-residue protein sequence, read N- to C-terminus: Cyclopropane mycolic acid synthase 1 (287 aa).

S-adenosyl-L-methionine-binding positions include 33 to 34 (YS), 68 to 76 (LLDVGCGWG), 94 to 99 (TLSKNQ), and 123 to 124 (WE). Cys-269 is an active-site residue.

The protein belongs to the CFA/CMAS family. Homodimer.

It is found in the cytoplasm. It carries out the reaction a 1-acyl-2-(9Z)-enoyl-sn-glycero-3-phospholipid + S-adenosyl-L-methionine = a 1-acyl-2-(9-cyclopronane)-acyl-sn-glycero-3-phospholipid + S-adenosyl-L-homocysteine + H(+). It participates in lipid metabolism; mycolic acid biosynthesis. Functionally, catalyzes the conversion of a double bond to a cyclopropane ring at the distal position of an alpha mycolic acid via the transfer of a methylene group from S-adenosyl-L-methionine. Cyclopropanated mycolic acids are key factors participating in cell envelope permeability, host immunomodulation and persistence. This is Cyclopropane mycolic acid synthase 1 (cmaA1) from Mycobacterium tuberculosis (strain ATCC 25177 / H37Ra).